We begin with the raw amino-acid sequence, 79 residues long: Conotoxin ArMSGL-021 (79 aa).

Positions 1–20 (MSRLGIMVLTLLLLVFIVTS) are cleaved as a signal peptide. The propeptide occupies 21-44 (HQDAGEKQATHRGAINFRWRRSLI). 3 disulfides stabilise this stretch: Cys-52/Cys-64, Cys-56/Cys-73, and Cys-63/Cys-77. Leu-78 bears the Leucine amide mark.

The protein belongs to the conotoxin O3 superfamily. As to expression, expressed by the venom duct.

The protein resides in the secreted. This Conus arenatus (Sand-dusted cone) protein is Conotoxin ArMSGL-021.